A 438-amino-acid polypeptide reads, in one-letter code: Xylose isomerase (438 aa).

Active-site residues include His-100 and Asp-103. Mg(2+) is bound by residues Glu-231, Glu-267, His-270, Asp-295, Asp-306, Asp-308, and Asp-338.

The protein belongs to the xylose isomerase family. Homotetramer. Requires Mg(2+) as cofactor.

It localises to the cytoplasm. The enzyme catalyses alpha-D-xylose = alpha-D-xylulofuranose. The protein is Xylose isomerase of Pseudomonas syringae pv. tomato (strain ATCC BAA-871 / DC3000).